Consider the following 164-residue polypeptide: Ribosome maturation factor RimM (164 aa).

The 72-residue stretch at 90–161 (KGSYFIADLI…TVTIKPLEIW (72 aa)) folds into the PRC barrel domain.

Belongs to the RimM family. As to quaternary structure, binds ribosomal protein uS19.

It localises to the cytoplasm. Its function is as follows. An accessory protein needed during the final step in the assembly of 30S ribosomal subunit, possibly for assembly of the head region. Essential for efficient processing of 16S rRNA. May be needed both before and after RbfA during the maturation of 16S rRNA. It has affinity for free ribosomal 30S subunits but not for 70S ribosomes. The polypeptide is Ribosome maturation factor RimM (Clostridium botulinum (strain Hall / ATCC 3502 / NCTC 13319 / Type A)).